Consider the following 432-residue polypeptide: Enolase (432 aa).

Position 163 (Q163) interacts with (2R)-2-phosphoglycerate. The Proton donor role is filled by E205. Mg(2+)-binding residues include D242, E289, and D316. Positions 341, 370, 371, and 392 each coordinate (2R)-2-phosphoglycerate. The active-site Proton acceptor is the K341.

Belongs to the enolase family. Requires Mg(2+) as cofactor. Probably phosphorylated.

The protein resides in the cytoplasm. Its subcellular location is the secreted. It is found in the cell surface. It carries out the reaction (2R)-2-phosphoglycerate = phosphoenolpyruvate + H2O. Its pathway is carbohydrate degradation; glycolysis; pyruvate from D-glyceraldehyde 3-phosphate: step 4/5. In terms of biological role, catalyzes the reversible conversion of 2-phosphoglycerate (2-PG) into phosphoenolpyruvate (PEP). It is essential for the degradation of carbohydrates via glycolysis. Functionally, 'Moonlights' as a plasminogen receptor. Binds plasminogen and human salivary mucin MG2 when expressed on the bacterial cell surface, potentially allowing the bacterium to acquire surface-associated proteolytic activity that may help the dissemination through oral tissues and entrance into the blood stream. The polypeptide is Enolase (Streptococcus mutans serotype c (strain ATCC 700610 / UA159)).